We begin with the raw amino-acid sequence, 241 residues long: Methylthioribulose-1-phosphate dehydratase (241 aa).

C96 contacts substrate. Zn(2+) is bound by residues H114 and H116. The active-site Proton donor/acceptor is E138. H194 is a Zn(2+) binding site.

Belongs to the aldolase class II family. MtnB subfamily. It depends on Zn(2+) as a cofactor.

It localises to the cytoplasm. It carries out the reaction 5-(methylsulfanyl)-D-ribulose 1-phosphate = 5-methylsulfanyl-2,3-dioxopentyl phosphate + H2O. The protein operates within amino-acid biosynthesis; L-methionine biosynthesis via salvage pathway; L-methionine from S-methyl-5-thio-alpha-D-ribose 1-phosphate: step 2/6. Its function is as follows. Catalyzes the dehydration of methylthioribulose-1-phosphate (MTRu-1-P) into 2,3-diketo-5-methylthiopentyl-1-phosphate (DK-MTP-1-P). Functions in the methionine salvage pathway. May play a role in apoptosis. This is Methylthioribulose-1-phosphate dehydratase from Danio rerio (Zebrafish).